A 613-amino-acid polypeptide reads, in one-letter code: Dihydroxy-acid dehydratase (613 aa).

Mg(2+) is bound at residue Asp-81. A [2Fe-2S] cluster-binding site is contributed by Cys-122. Positions 123 and 124 each coordinate Mg(2+). Lys-124 bears the N6-carboxylysine mark. Cys-195 lines the [2Fe-2S] cluster pocket. Mg(2+) is bound at residue Glu-491. Residue Ser-517 is the Proton acceptor of the active site.

Belongs to the IlvD/Edd family. Homodimer. It depends on [2Fe-2S] cluster as a cofactor. The cofactor is Mg(2+).

It catalyses the reaction (2R)-2,3-dihydroxy-3-methylbutanoate = 3-methyl-2-oxobutanoate + H2O. The enzyme catalyses (2R,3R)-2,3-dihydroxy-3-methylpentanoate = (S)-3-methyl-2-oxopentanoate + H2O. It functions in the pathway amino-acid biosynthesis; L-isoleucine biosynthesis; L-isoleucine from 2-oxobutanoate: step 3/4. Its pathway is amino-acid biosynthesis; L-valine biosynthesis; L-valine from pyruvate: step 3/4. In terms of biological role, functions in the biosynthesis of branched-chain amino acids. Catalyzes the dehydration of (2R,3R)-2,3-dihydroxy-3-methylpentanoate (2,3-dihydroxy-3-methylvalerate) into 2-oxo-3-methylpentanoate (2-oxo-3-methylvalerate) and of (2R)-2,3-dihydroxy-3-methylbutanoate (2,3-dihydroxyisovalerate) into 2-oxo-3-methylbutanoate (2-oxoisovalerate), the penultimate precursor to L-isoleucine and L-valine, respectively. The chain is Dihydroxy-acid dehydratase from Aeromonas salmonicida (strain A449).